Here is a 745-residue protein sequence, read N- to C-terminus: Eukaryotic translation initiation factor 3 subunit B (745 aa).

Residues 41–129 enclose the RRM domain; that stretch reads DVIVIEGVPV…HRFSVHRFTD (89 aa). 4 WD repeats span residues 189 to 230, 251 to 293, 303 to 344, and 580 to 625; these read EHSR…RFMR, WSHE…RSFP, GQLK…LLEK, and GEHY…LQKH. Positions 644-745 form a coiled coil; it reads GKDEQKRVRK…IIEETEEVLA (102 aa).

The protein belongs to the eIF-3 subunit B family. In terms of assembly, component of the eukaryotic translation initiation factor 3 (eIF-3) complex.

The protein resides in the cytoplasm. Functionally, RNA-binding component of the eukaryotic translation initiation factor 3 (eIF-3) complex, which is involved in protein synthesis of a specialized repertoire of mRNAs and, together with other initiation factors, stimulates binding of mRNA and methionyl-tRNAi to the 40S ribosome. The eIF-3 complex specifically targets and initiates translation of a subset of mRNAs involved in cell proliferation. This chain is Eukaryotic translation initiation factor 3 subunit B, found in Mycosarcoma maydis (Corn smut fungus).